Here is a 198-residue protein sequence, read N- to C-terminus: Probable chorismate pyruvate-lyase (198 aa).

Substrate contacts are provided by Arg-73, Leu-111, and Glu-172.

The protein belongs to the UbiC family.

The protein localises to the cytoplasm. It carries out the reaction chorismate = 4-hydroxybenzoate + pyruvate. It participates in cofactor biosynthesis; ubiquinone biosynthesis. In terms of biological role, removes the pyruvyl group from chorismate, with concomitant aromatization of the ring, to provide 4-hydroxybenzoate (4HB) for the ubiquinone pathway. This chain is Probable chorismate pyruvate-lyase, found in Burkholderia lata (strain ATCC 17760 / DSM 23089 / LMG 22485 / NCIMB 9086 / R18194 / 383).